Consider the following 269-residue polypeptide: Cleavage and polyadenylation specificity factor subunit 4 (269 aa).

5 consecutive C3H1-type zinc fingers follow at residues K35–S61, G62–D89, M90–P117, E118–H142, and T143–F169. Residues M173–R199 are disordered. Phosphoserine occurs at positions 200, 202, and 212. The segment at V243–K260 adopts a CCHC-type zinc-finger fold. Residue S267 is modified to Phosphoserine.

Belongs to the CPSF4/YTH1 family. As to quaternary structure, component of the cleavage and polyadenylation specificity factor (CPSF) complex, composed of CPSF1, CPSF2, CPSF3, CPSF4 and FIP1L1. Interacts with FIP1L1. In terms of assembly, (Microbial infection) Interacts with influenza A virus NS1 blocks processing of pre-mRNAs, thereby preventing nuclear export of host cell mRNAs.

It is found in the nucleus. Functionally, component of the cleavage and polyadenylation specificity factor (CPSF) complex that play a key role in pre-mRNA 3'-end formation, recognizing the AAUAAA signal sequence and interacting with poly(A) polymerase and other factors to bring about cleavage and poly(A) addition. CPSF4 binds RNA polymers with a preference for poly(U). The sequence is that of Cleavage and polyadenylation specificity factor subunit 4 (CPSF4) from Homo sapiens (Human).